We begin with the raw amino-acid sequence, 84 residues long: Turripeptide IX-03 (84 aa).

The N-terminal stretch at 1–21 (MGFYMLLTVALLLTSLMNVEA) is a signal peptide. Residues 22–39 (TPVDQAERSALEKSGLGN) constitute a propeptide that is removed on maturation. Intrachain disulfides connect Cys48–Cys70, Cys55–Cys74, and Cys60–Cys81.

Expressed by the venom duct.

It is found in the secreted. This is Turripeptide IX-03 from Gemmula speciosa (Splendid gem-turris).